Consider the following 626-residue polypeptide: Chaperone protein DnaK (626 aa).

At threonine 175 the chain carries Phosphothreonine; by autocatalysis. Disordered stretches follow at residues 469 to 488 (DKGT…GLPK), 498 to 517 (AEAH…TRNQ), and 583 to 626 (AQQG…KDNK). The span at 498–516 (AEAHEAEDKKRKEDAETRN) shows a compositional bias: basic and acidic residues. A compositionally biased stretch (acidic residues) spans 609–626 (SDDDVVDAEVVDDDKDNK).

This sequence belongs to the heat shock protein 70 family.

In terms of biological role, acts as a chaperone. The chain is Chaperone protein DnaK from Bifidobacterium adolescentis (strain ATCC 15703 / DSM 20083 / NCTC 11814 / E194a).